The following is a 443-amino-acid chain: 23S rRNA (uracil(1939)-C(5))-methyltransferase RlmD (443 aa).

The 63-residue stretch at 4-66 (QNRFDRTSFQ…RHFDEARVVE (63 aa)) folds into the TRAM domain. [4Fe-4S] cluster-binding residues include cysteine 79, cysteine 85, cysteine 88, and cysteine 167. The S-adenosyl-L-methionine site is built by glutamine 275, phenylalanine 304, asparagine 309, glutamate 325, aspartate 352, and aspartate 373. The active-site Nucleophile is cysteine 399.

This sequence belongs to the class I-like SAM-binding methyltransferase superfamily. RNA M5U methyltransferase family. RlmD subfamily.

The catalysed reaction is uridine(1939) in 23S rRNA + S-adenosyl-L-methionine = 5-methyluridine(1939) in 23S rRNA + S-adenosyl-L-homocysteine + H(+). Catalyzes the formation of 5-methyl-uridine at position 1939 (m5U1939) in 23S rRNA. This is 23S rRNA (uracil(1939)-C(5))-methyltransferase RlmD from Xylella fastidiosa (strain Temecula1 / ATCC 700964).